The following is an 847-amino-acid chain: Guanine nucleotide exchange factor VAV3 (847 aa).

The 119-residue stretch at 1–119 folds into the Calponin-homology (CH) domain; it reads MEPWKQCAQW…ETLSRLSRTP (119 aa). Phosphotyrosine is present on Tyr-141. Residues 192–371 form the DH domain; sequence IRSCCLAEIR…KDLAQYVNEV (180 aa). The PH domain occupies 400-502; sequence RPQGDGEIRI…WLEQFEMALS (103 aa). Residues 513–562 form a Phorbol-ester/DAG-type zinc finger; it reads FHDFKMHTFTRVTSCRVCQMLLRGTFYQGYLCFKCGAKAHKECLGRVDNC. Residues 560–847 are sufficient for interaction with ROS1; that stretch reads DNCGRVNSVE…FPSTYVEEDE (288 aa). Positions 592 to 660 constitute an SH3 1 domain; that stretch reads PGLPKMQVIR…PSDAVKPSPC (69 aa). The SH2 domain occupies 672–766; it reads WYAGPMERLQ…TLDTTLQFPY (95 aa). The region spanning 788–847 is the SH3 2 domain; sequence KVLGIAIARYDFCARDMRELSLLKGDMVKIYTKMSANGWWRGEVNGRVGWFPSTYVEEDE.

In terms of assembly, interacts with the PH domain of APS. Interacts with ROS1; constitutive interaction that mediates VAV3 phosphorylation. Interacts (via SH2 domains) with the phosphorylated form of EPHA2. Post-translationally, phosphorylated. Phosphorylation can be mediated by ROS1. In osteoclasts, undergoes tyrosine phosphorylation in response to CSF1. Abundantly expressed in osteoclasts and mature osteoblasts. Also expressed in bone marrow macrophages (at protein level):.

In terms of biological role, exchange factor for GTP-binding proteins RhoA, RhoG and, to a lesser extent, Rac1. Binds physically to the nucleotide-free states of those GTPases. Plays an important role in angiogenesis. Its recruitment by phosphorylated EPHA2 is critical for EFNA1-induced RAC1 GTPase activation and vascular endothelial cell migration and assembly. May be important for integrin-mediated signaling, at least in some cell types. In osteoclasts, along with SYK tyrosine kinase, required for signaling through integrin alpha-v/beta-1 (ITAGV-ITGB1), a crucial event for osteoclast proper cytoskeleton organization and function. This signaling pathway involves RAC1, but not RHO, activation. Necessary for proper wound healing. In the course of wound healing, required for the phagocytotic cup formation preceding macrophage phagocytosis of apoptotic neutrophils. Responsible for integrin beta-2-mediated macrophage adhesion and, to a lesser extent, contributes to beta-3-mediated adhesion. Does not affect integrin beta-1-mediated adhesion. The protein is Guanine nucleotide exchange factor VAV3 (Vav3) of Mus musculus (Mouse).